A 351-amino-acid chain; its full sequence is Homeobox-leucine zipper protein HOX23 (351 aa).

A disordered region spans residues 34–128; the sequence is LQDHAHGGHG…SFESGNKLEP (95 aa). Residues 56-65 show a composition bias toward low complexity; it reads SPFLPDLAMD. The segment at residues 101–160 is a DNA-binding region (homeobox); sequence GGEKKRRLSVEQVRTLERSFESGNKLEPERKAQLARALGLQPRQVAIWFQNRRARWKTKQ. Residues 114 to 128 are compositionally biased toward basic and acidic residues; sequence RTLERSFESGNKLEP. Residues 159–203 are leucine-zipper; sequence KQLEKDFDALRRQLDAARAENDALLSLNSKLHAEIVALKGGAAAA. Residues 227-263 form a disordered region; that stretch reads EASCSNRSENSSEINLDISRPAPPPPPPPANESPVNR. Polar residues predominate over residues 228-240; that stretch reads ASCSNRSENSSEI. The span at 247 to 257 shows a compositional bias: pro residues; it reads PAPPPPPPPAN.

Belongs to the HD-ZIP homeobox family. Class I subfamily. As to expression, expressed in seedlings, roots, stems, leaf sheaths and panicles.

It localises to the nucleus. Its function is as follows. Probable transcription factor. The polypeptide is Homeobox-leucine zipper protein HOX23 (HOX23) (Oryza sativa subsp. indica (Rice)).